We begin with the raw amino-acid sequence, 442 residues long: D-serine dehydratase (442 aa).

An N6-(pyridoxal phosphate)lysine modification is found at lysine 118.

Belongs to the serine/threonine dehydratase family. DsdA subfamily. As to quaternary structure, monomer. The cofactor is pyridoxal 5'-phosphate.

The catalysed reaction is D-serine = pyruvate + NH4(+). The protein is D-serine dehydratase of Escherichia fergusonii (strain ATCC 35469 / DSM 13698 / CCUG 18766 / IAM 14443 / JCM 21226 / LMG 7866 / NBRC 102419 / NCTC 12128 / CDC 0568-73).